A 2157-amino-acid polypeptide reads, in one-letter code: DExH-box ATP-dependent RNA helicase DExH14 (2157 aa).

Positions 374 to 394 (KAASNTQSRMPTYGTQVTVQT) are disordered. Residues 375–394 (AASNTQSRMPTYGTQVTVQT) show a composition bias toward polar residues. In terms of domain architecture, Helicase ATP-binding 1 spans 517 to 699 (QTVYHTNENI…FLRVNTDTGL (183 aa)). 530 to 537 (APTGAGKT) contacts ATP. The DEVH box motif lies at 641–644 (DEVH). Positions 734–932 (CYKKVVDSIK…SLKDNLNAEV (199 aa)) constitute a Helicase C-terminal 1 domain. The 308-residue stretch at 1008 to 1315 (CTELGRVASH…LHAETYFTIS (308 aa)) folds into the SEC63 1 domain. The 176-residue stretch at 1365–1540 (HVLYHTDNNV…WLGVGEIGLF (176 aa)) folds into the Helicase ATP-binding 2 domain. 1378 to 1385 (APTGSGKT) contributes to the ATP binding site. The short motif at 1482-1485 (DEIH) is the DEIH box element. Residues 1571 to 1780 (NKPAYAAICT…GTIGNKEDAV (210 aa)) form the Helicase C-terminal 2 domain. The SEC63 2 domain maps to 1839-2150 (PTMLGTIASQ…YLGFEQEHSI (312 aa)).

Belongs to the DExH box helicase family.

The protein resides in the nucleus. The enzyme catalyses ATP + H2O = ADP + phosphate + H(+). In terms of biological role, RNA helicase that plays an essential role in pre-mRNA splicing as component of the U5 snRNP and U4/U6-U5 tri-snRNP complexes. Involved in spliceosome assembly, activation and disassembly. The sequence is that of DExH-box ATP-dependent RNA helicase DExH14 from Arabidopsis thaliana (Mouse-ear cress).